The chain runs to 284 residues: Pantothenate synthetase (284 aa).

30 to 37 (MGNLHEGH) contributes to the ATP binding site. His-37 functions as the Proton donor in the catalytic mechanism. Gln-61 contacts (R)-pantoate. Residue Gln-61 participates in beta-alanine binding. An ATP-binding site is contributed by 149–152 (GEKD). Gln-155 serves as a coordination point for (R)-pantoate. ATP contacts are provided by residues Val-178 and 186–189 (LSSR).

It belongs to the pantothenate synthetase family. In terms of assembly, homodimer.

The protein localises to the cytoplasm. It carries out the reaction (R)-pantoate + beta-alanine + ATP = (R)-pantothenate + AMP + diphosphate + H(+). Its pathway is cofactor biosynthesis; (R)-pantothenate biosynthesis; (R)-pantothenate from (R)-pantoate and beta-alanine: step 1/1. In terms of biological role, catalyzes the condensation of pantoate with beta-alanine in an ATP-dependent reaction via a pantoyl-adenylate intermediate. In Yersinia pestis bv. Antiqua (strain Antiqua), this protein is Pantothenate synthetase.